Here is an 814-residue protein sequence, read N- to C-terminus: DNA ligase (814 aa).

Residues 46-50 (DAEYD), 95-96 (SL), and E129 contribute to the NAD(+) site. K131 functions as the N6-AMP-lysine intermediate in the catalytic mechanism. 4 residues coordinate NAD(+): R152, E189, K305, and K329. The Zn(2+) site is built by C434, C437, C458, and C464. The segment at 526–549 (SAQRRTEGEPAPKKPTKKKGEEED) is disordered. The 80-residue stretch at 735-814 (TSAAAFAGKT…DDWLAMLAEA (80 aa)) folds into the BRCT domain.

It belongs to the NAD-dependent DNA ligase family. LigA subfamily. Mg(2+) is required as a cofactor. The cofactor is Mn(2+).

It carries out the reaction NAD(+) + (deoxyribonucleotide)n-3'-hydroxyl + 5'-phospho-(deoxyribonucleotide)m = (deoxyribonucleotide)n+m + AMP + beta-nicotinamide D-nucleotide.. Functionally, DNA ligase that catalyzes the formation of phosphodiester linkages between 5'-phosphoryl and 3'-hydroxyl groups in double-stranded DNA using NAD as a coenzyme and as the energy source for the reaction. It is essential for DNA replication and repair of damaged DNA. The polypeptide is DNA ligase (Methylorubrum extorquens (strain CM4 / NCIMB 13688) (Methylobacterium extorquens)).